The sequence spans 422 residues: 2-oxoglutarate and iron-dependent oxygenase JMJD4 (422 aa).

Positions Gln-139–Leu-298 constitute a JmjC domain. The Fe cation site is built by His-186, Asp-188, and His-266.

This sequence belongs to the JMJD6 family. It depends on Fe(2+) as a cofactor.

It localises to the cytoplasm. The enzyme catalyses L-lysyl-[protein] + 2-oxoglutarate + O2 = 4-hydroxy-L-lysyl-[protein] + succinate + CO2. In terms of biological role, catalyzes the 2-oxoglutarate and iron-dependent C4-lysyl hydroxylation of ETF1 at 'Lys-63' thereby promoting the translational termination efficiency of ETF1. The chain is 2-oxoglutarate and iron-dependent oxygenase JMJD4 (jmjd4) from Danio rerio (Zebrafish).